The chain runs to 485 residues: Acetyl-coenzyme A carboxylase carboxyl transferase subunit beta, chloroplastic (485 aa).

The 268-residue stretch at 218-485 (LWIQCDNCYA…FFPLNKNEIK (268 aa)) folds into the CoA carboxyltransferase N-terminal domain. Zn(2+) contacts are provided by Cys-222, Cys-225, Cys-241, and Cys-244. The C4-type zinc finger occupies 222 to 244 (CDNCYALIYKKALKFKMNVCEQC).

This sequence belongs to the AccD/PCCB family. As to quaternary structure, acetyl-CoA carboxylase is a heterohexamer composed of biotin carboxyl carrier protein, biotin carboxylase and 2 subunits each of ACCase subunit alpha and ACCase plastid-coded subunit beta (accD). Requires Zn(2+) as cofactor.

The protein localises to the plastid. It is found in the chloroplast stroma. It catalyses the reaction N(6)-carboxybiotinyl-L-lysyl-[protein] + acetyl-CoA = N(6)-biotinyl-L-lysyl-[protein] + malonyl-CoA. Its pathway is lipid metabolism; malonyl-CoA biosynthesis; malonyl-CoA from acetyl-CoA: step 1/1. Its function is as follows. Component of the acetyl coenzyme A carboxylase (ACC) complex. Biotin carboxylase (BC) catalyzes the carboxylation of biotin on its carrier protein (BCCP) and then the CO(2) group is transferred by the transcarboxylase to acetyl-CoA to form malonyl-CoA. The chain is Acetyl-coenzyme A carboxylase carboxyl transferase subunit beta, chloroplastic from Aethionema cordifolium (Lebanon stonecress).